Reading from the N-terminus, the 359-residue chain is Spore germination protein GerQC (359 aa).

The first 16 residues, 1–16, serve as a signal peptide directing secretion; that stretch reads MKRWILFLILSVFLIG. Cys-17 carries N-palmitoyl cysteine lipidation. Cys-17 carries the S-diacylglycerol cysteine lipid modification.

The protein belongs to the GerABKC lipoprotein family.

Its subcellular location is the membrane. In terms of biological role, required for the germination response to inosine. Has no role in L-alanine germination. The polypeptide is Spore germination protein GerQC (gerQC) (Bacillus cereus).